The primary structure comprises 379 residues: Alkanesulfonate monooxygenase (379 aa).

The protein belongs to the SsuD family.

It carries out the reaction an alkanesulfonate + FMNH2 + O2 = an aldehyde + FMN + sulfite + H2O + 2 H(+). Functionally, catalyzes the desulfonation of aliphatic sulfonates. In Pseudomonas savastanoi pv. phaseolicola (strain 1448A / Race 6) (Pseudomonas syringae pv. phaseolicola (strain 1448A / Race 6)), this protein is Alkanesulfonate monooxygenase.